Reading from the N-terminus, the 359-residue chain is Membrane-bound lytic murein transglycosylase C (359 aa).

The N-terminal stretch at M1–S16 is a signal peptide. C17 carries the N-palmitoyl cysteine lipid modification. C17 carries the S-diacylglycerol cysteine lipid modification.

It belongs to the transglycosylase Slt family.

Its subcellular location is the cell outer membrane. The catalysed reaction is Exolytic cleavage of the (1-&gt;4)-beta-glycosidic linkage between N-acetylmuramic acid (MurNAc) and N-acetylglucosamine (GlcNAc) residues in peptidoglycan, from either the reducing or the non-reducing ends of the peptidoglycan chains, with concomitant formation of a 1,6-anhydrobond in the MurNAc residue.. Functionally, murein-degrading enzyme. May play a role in recycling of muropeptides during cell elongation and/or cell division. This chain is Membrane-bound lytic murein transglycosylase C, found in Escherichia coli O7:K1 (strain IAI39 / ExPEC).